A 433-amino-acid polypeptide reads, in one-letter code: tRNA-2-methylthio-N(6)-dimethylallyladenosine synthase (433 aa).

In terms of domain architecture, MTTase N-terminal spans 4-119; it reads KKLFIQTLGC…ITQAIKTPKF (116 aa). 6 residues coordinate [4Fe-4S] cluster: C13, C50, C82, C151, C155, and C158. A Radical SAM core domain is found at 137–370; that stretch reads RNSIYKSYIN…QNRHSEILDE (234 aa). One can recognise a TRAM domain in the interval 373–433; that stretch reads KKQENKTFKV…KRMVLYGEIV (61 aa).

It belongs to the methylthiotransferase family. MiaB subfamily. As to quaternary structure, monomer. Requires [4Fe-4S] cluster as cofactor.

Its subcellular location is the cytoplasm. The enzyme catalyses N(6)-dimethylallyladenosine(37) in tRNA + (sulfur carrier)-SH + AH2 + 2 S-adenosyl-L-methionine = 2-methylsulfanyl-N(6)-dimethylallyladenosine(37) in tRNA + (sulfur carrier)-H + 5'-deoxyadenosine + L-methionine + A + S-adenosyl-L-homocysteine + 2 H(+). Its function is as follows. Catalyzes the methylthiolation of N6-(dimethylallyl)adenosine (i(6)A), leading to the formation of 2-methylthio-N6-(dimethylallyl)adenosine (ms(2)i(6)A) at position 37 in tRNAs that read codons beginning with uridine. This is tRNA-2-methylthio-N(6)-dimethylallyladenosine synthase from Campylobacter jejuni (strain RM1221).